A 154-amino-acid chain; its full sequence is 6,7-dimethyl-8-ribityllumazine synthase (154 aa).

5-amino-6-(D-ribitylamino)uracil contacts are provided by residues Phe-23, 57–59 (AFE), and 81–83 (AVI). (2S)-2-hydroxy-3-oxobutyl phosphate is bound at residue 86-87 (AT). His-89 serves as the catalytic Proton donor. Phe-114 provides a ligand contact to 5-amino-6-(D-ribitylamino)uracil. Residue Arg-128 coordinates (2S)-2-hydroxy-3-oxobutyl phosphate.

It belongs to the DMRL synthase family.

The enzyme catalyses (2S)-2-hydroxy-3-oxobutyl phosphate + 5-amino-6-(D-ribitylamino)uracil = 6,7-dimethyl-8-(1-D-ribityl)lumazine + phosphate + 2 H2O + H(+). It functions in the pathway cofactor biosynthesis; riboflavin biosynthesis; riboflavin from 2-hydroxy-3-oxobutyl phosphate and 5-amino-6-(D-ribitylamino)uracil: step 1/2. In terms of biological role, catalyzes the formation of 6,7-dimethyl-8-ribityllumazine by condensation of 5-amino-6-(D-ribitylamino)uracil with 3,4-dihydroxy-2-butanone 4-phosphate. This is the penultimate step in the biosynthesis of riboflavin. The protein is 6,7-dimethyl-8-ribityllumazine synthase of Nautilia profundicola (strain ATCC BAA-1463 / DSM 18972 / AmH).